The following is a 437-amino-acid chain: UDP-N-acetylmuramate--L-alanine ligase (437 aa).

108 to 114 (GAHGKTS) is a binding site for ATP.

This sequence belongs to the MurCDEF family.

It localises to the cytoplasm. The catalysed reaction is UDP-N-acetyl-alpha-D-muramate + L-alanine + ATP = UDP-N-acetyl-alpha-D-muramoyl-L-alanine + ADP + phosphate + H(+). Its pathway is cell wall biogenesis; peptidoglycan biosynthesis. Cell wall formation. The sequence is that of UDP-N-acetylmuramate--L-alanine ligase from Staphylococcus haemolyticus (strain JCSC1435).